Here is a 313-residue protein sequence, read N- to C-terminus: UPF0761 membrane protein VS_0126 (313 aa).

Transmembrane regions (helical) follow at residues tyrosine 41–leucine 61, methionine 104–aspartate 124, alanine 139–alanine 159, valine 185–valine 205, alanine 217–isoleucine 237, and alanine 249–valine 269. Positions glutamate 281–valine 290 are enriched in polar residues. A disordered region spans residues glutamate 281 to lysine 313.

This sequence belongs to the UPF0761 family.

It localises to the cell inner membrane. The sequence is that of UPF0761 membrane protein VS_0126 from Vibrio atlanticus (strain LGP32) (Vibrio splendidus (strain Mel32)).